The primary structure comprises 249 residues: 5'-nucleotidase SurE (249 aa).

Residues Asp8, Asp9, Ser39, and Asn91 each contribute to the a divalent metal cation site.

It belongs to the SurE nucleotidase family. Requires a divalent metal cation as cofactor.

It localises to the cytoplasm. It catalyses the reaction a ribonucleoside 5'-phosphate + H2O = a ribonucleoside + phosphate. Functionally, nucleotidase that shows phosphatase activity on nucleoside 5'-monophosphates. The chain is 5'-nucleotidase SurE from Ectopseudomonas mendocina (strain ymp) (Pseudomonas mendocina).